The sequence spans 333 residues: DNA-directed RNA polymerase subunit alpha (333 aa).

The interval 1–251 is alpha N-terminal domain (alpha-NTD); it reads MEKLTKIKHR…AHFQTIGDLT (251 aa). The tract at residues 272-333 is alpha C-terminal domain (alpha-CTD); sequence DMEIRLLNLS…KLNEYGKLKN (62 aa).

It belongs to the RNA polymerase alpha chain family. Homodimer. The RNAP catalytic core consists of 2 alpha, 1 beta, 1 beta' and 1 omega subunit. When a sigma factor is associated with the core the holoenzyme is formed, which can initiate transcription.

It catalyses the reaction RNA(n) + a ribonucleoside 5'-triphosphate = RNA(n+1) + diphosphate. In terms of biological role, DNA-dependent RNA polymerase catalyzes the transcription of DNA into RNA using the four ribonucleoside triphosphates as substrates. The sequence is that of DNA-directed RNA polymerase subunit alpha from Mycoplasmopsis synoviae (strain 53) (Mycoplasma synoviae).